The chain runs to 768 residues: P-selectin (768 aa).

A signal peptide spans 1-41; the sequence is MAGCPKGSWKPRLRSVVLGAAQLIWLSALISELVNRKKVAT. Residues 42–709 lie on the Extracellular side of the membrane; it reads WTYNYSTKAY…QAGTLTIQEA (668 aa). Asn45, Asn54, and Asn107 each carry an N-linked (GlcNAc...) asparagine glycan. The region spanning 58-158 is the C-type lectin domain; the sequence is AFCKRHFTDL…PCFKRKRALC (101 aa). 20 cysteine pairs are disulfide-bonded: Cys60–Cys158, Cys131–Cys150, Cys168–Cys183, Cys185–Cys194, Cys200–Cys244, Cys230–Cys257, Cys262–Cys306, Cys292–Cys319, Cys324–Cys368, Cys354–Cys381, Cys386–Cys430, Cys416–Cys443, Cys448–Cys492, Cys478–Cys505, Cys510–Cys554, Cys540–Cys567, Cys580–Cys624, Cys610–Cys637, Cys642–Cys686, and Cys672–Cys699. Positions 121, 123, and 124 each coordinate Ca(2+). Asn123 lines the a carbohydrate pocket. 2 residues coordinate a carbohydrate: Glu133 and Asn146. 2 residues coordinate Ca(2+): Asn146 and Asp147. Residues 159–195 form the EGF-like domain; sequence YTASCQDMSCNSQGERIETIGSYTCSCYPGFYGPECE. 8 Sushi domains span residues 198-259, 260-321, 322-383, 384-445, 446-507, 508-569, 578-639, and 640-701; these read QECG…QCKA, VQCQ…TCEA, IACE…VCEA, LQCQ…ECQA, VSCT…MCEA, IKCP…TCKG, VRCP…VCRA, and VKCS…TCQA. Asn212 carries an N-linked (GlcNAc...) asparagine glycan. The N-linked (GlcNAc...) asparagine glycan is linked to Asn347. N-linked (GlcNAc...) asparagine glycosylation occurs at Asn456. A glycan (N-linked (GlcNAc...) asparagine) is linked at Asn603. Residues Asn654, Asn661, and Asn679 are each glycosylated (N-linked (GlcNAc...) asparagine). A helical transmembrane segment spans residues 710–733; the sequence is LTYLGGALASTSGLAVGGTLLALL. Residues 734–768 lie on the Cytoplasmic side of the membrane; that stretch reads RKRLRKKDDGKCPLNPHSHLGTYGVFTNAAYDPTP. Cys745 is lipidated: S-palmitoyl cysteine; alternate. Cys745 is lipidated: S-stearoyl cysteine; alternate. The Endocytosis signal signature appears at 756 to 759; the sequence is YGVF. The segment at 759–768 is interaction with SNX17; that stretch reads FTNAAYDPTP.

The protein belongs to the selectin/LECAM family. In terms of assembly, interacts with SNX17. Interacts with SELPLG/PSGL1 and PODXL2 and mediates neutrophil adhesion and leukocyte rolling. This interaction requires the sialyl-Lewis X epitope of SELPLG and PODXL2, and specific tyrosine sulfation on SELPLG. Interacts (via C-type lectin domain) with alpha-IIb/beta3 integrin ITGA2B:ITGB3 and alpha-V/beta-3 integrin ITGAV:ITGB3. Interacts with alpha5/beta1 integrin ITGA5:ITGB1 and alpha4/beta1 integrin ITGA4:ITGB. As to expression, not detected in the absence of exposure to lipopolysaccharide (LPS). Detected only after exposure to lipopolysaccharide (LPS) in the tissues examined: spleen, lung, brain, liver, heart, kidney, thymus and small intestine.

The protein resides in the cell membrane. Its function is as follows. Ca(2+)-dependent receptor for myeloid cells that binds to carbohydrates on neutrophils and monocytes. Mediates the interaction of activated endothelial cells or platelets with leukocytes. The ligand recognized is sialyl-Lewis X. Mediates rapid rolling of leukocyte rolling over vascular surfaces during the initial steps in inflammation through interaction with SELPLG. Mediates cell-cell interactions and cell adhesion via the interaction with integrin alpha-IIb/beta3 (ITGA2B:ITGB3) and integrin alpha-V/beta-3 (ITGAV:ITGB3). The protein is P-selectin (Selp) of Rattus norvegicus (Rat).